A 416-amino-acid polypeptide reads, in one-letter code: Tyrosine--tRNA ligase (416 aa).

Tyr34 contributes to the L-tyrosine binding site. The 'HIGH' region signature appears at 39 to 48; the sequence is PTGDSLHIGH. Residues Tyr165 and Gln169 each contribute to the L-tyrosine site. The 'KMSKS' region motif lies at 227 to 231; sequence KFGKT. Lys230 contributes to the ATP binding site. The region spanning 349–416 is the S4 RNA-binding domain; that stretch reads ENIIIWLTDN…KKHYYLARVK (68 aa).

This sequence belongs to the class-I aminoacyl-tRNA synthetase family. TyrS type 1 subfamily. As to quaternary structure, homodimer.

It localises to the cytoplasm. It catalyses the reaction tRNA(Tyr) + L-tyrosine + ATP = L-tyrosyl-tRNA(Tyr) + AMP + diphosphate + H(+). Functionally, catalyzes the attachment of tyrosine to tRNA(Tyr) in a two-step reaction: tyrosine is first activated by ATP to form Tyr-AMP and then transferred to the acceptor end of tRNA(Tyr). The protein is Tyrosine--tRNA ligase of Limosilactobacillus reuteri (strain DSM 20016) (Lactobacillus reuteri).